The chain runs to 393 residues: S-adenosylmethionine synthase (393 aa).

His17 is an ATP binding site. Residue Asp19 coordinates Mg(2+). Glu45 lines the K(+) pocket. Residues Glu58 and Gln106 each coordinate L-methionine. The segment at Gln106–Ala116 is flexible loop. ATP contacts are provided by residues Asp171–Lys173, Lys237–Phe238, Asp246, Arg252–Lys253, Ala269, and Lys273. Position 246 (Asp246) interacts with L-methionine. Lys277 contributes to the L-methionine binding site.

This sequence belongs to the AdoMet synthase family. As to quaternary structure, homotetramer; dimer of dimers. Mg(2+) serves as cofactor. The cofactor is K(+).

It is found in the cytoplasm. The catalysed reaction is L-methionine + ATP + H2O = S-adenosyl-L-methionine + phosphate + diphosphate. It participates in amino-acid biosynthesis; S-adenosyl-L-methionine biosynthesis; S-adenosyl-L-methionine from L-methionine: step 1/1. Functionally, catalyzes the formation of S-adenosylmethionine (AdoMet) from methionine and ATP. The overall synthetic reaction is composed of two sequential steps, AdoMet formation and the subsequent tripolyphosphate hydrolysis which occurs prior to release of AdoMet from the enzyme. The chain is S-adenosylmethionine synthase from Jannaschia sp. (strain CCS1).